The chain runs to 378 residues: Chaperone protein DnaJ (378 aa).

The J domain occupies 5 to 70; that stretch reads DYYEVLGVAK…QKRAAYDQYG (66 aa). The CR-type zinc finger occupies 138-216; that stretch reads GYDTQIRVPS…CHGSGKVKET (79 aa). Zn(2+)-binding residues include Cys151, Cys154, Cys168, Cys171, Cys190, Cys193, Cys204, and Cys207. CXXCXGXG motif repeat units lie at residues 151-158, 168-175, 190-197, and 204-211; these read CEVCHGSG, CPTCHGQG, CPKCHGTG, and CAHCHGSG.

Belongs to the DnaJ family. As to quaternary structure, homodimer. Zn(2+) serves as cofactor.

Its subcellular location is the cytoplasm. Functionally, participates actively in the response to hyperosmotic and heat shock by preventing the aggregation of stress-denatured proteins and by disaggregating proteins, also in an autonomous, DnaK-independent fashion. Unfolded proteins bind initially to DnaJ; upon interaction with the DnaJ-bound protein, DnaK hydrolyzes its bound ATP, resulting in the formation of a stable complex. GrpE releases ADP from DnaK; ATP binding to DnaK triggers the release of the substrate protein, thus completing the reaction cycle. Several rounds of ATP-dependent interactions between DnaJ, DnaK and GrpE are required for fully efficient folding. Also involved, together with DnaK and GrpE, in the DNA replication of plasmids through activation of initiation proteins. This Burkholderia cenocepacia (strain HI2424) protein is Chaperone protein DnaJ.